Consider the following 351-residue polypeptide: Phosphatidylinositol transfer protein PDR16 (351 aa).

A CRAL-TRIO domain is found at 135 to 295; the sequence is LVAVENESGK…LYGGDLKFKY (161 aa).

As to quaternary structure, homodimer. Apo-SFH3 forms a dimer through the hydrophobic interaction of gating helices. Binding of phosphatidylinositol leads to dissociation of the dimer into monomers in a reversible manner.

The protein resides in the lipid droplet. It localises to the microsome membrane. The protein localises to the endoplasmic reticulum membrane. It catalyses the reaction a 1,2-diacyl-sn-glycero-3-phospho-(1D-myo-inositol)(in) = a 1,2-diacyl-sn-glycero-3-phospho-(1D-myo-inositol)(out). Has phosphatidylinositol transfer activity. Involved in the regulation of the phospholipid composition of plasma- and endomembranes. Altering plasma membrane composition may provide a possible mechanism for multidrug resistance. Involved in the regulation of sterol biosynthesis. Contributes to efficient phospholipase D1 activation in the regulation of phospholipid turnover. Regulates the release of fatty acids from lipid droplets. The protein is Phosphatidylinositol transfer protein PDR16 (PDR16) of Saccharomyces cerevisiae (strain ATCC 204508 / S288c) (Baker's yeast).